The primary structure comprises 530 residues: Phosphoenolpyruvate carboxykinase (ATP) 2 (530 aa).

R54, Y191, and K197 together coordinate substrate. ATP contacts are provided by residues K197, H216, and G232–T240. Positions 197 and 216 each coordinate Mn(2+). D253 serves as a coordination point for Mn(2+). Residues E281, R318, R437 to V438, and T443 each bind ATP. A substrate-binding site is contributed by R318.

This sequence belongs to the phosphoenolpyruvate carboxykinase (ATP) family. Mn(2+) is required as a cofactor.

The protein resides in the cytoplasm. The catalysed reaction is oxaloacetate + ATP = phosphoenolpyruvate + ADP + CO2. The protein operates within carbohydrate biosynthesis; gluconeogenesis. In terms of biological role, involved in the gluconeogenesis. Catalyzes the conversion of oxaloacetate (OAA) to phosphoenolpyruvate (PEP) through direct phosphoryl transfer between the nucleoside triphosphate and OAA. The sequence is that of Phosphoenolpyruvate carboxykinase (ATP) 2 from Salinibacter ruber (strain DSM 13855 / M31).